Reading from the N-terminus, the 289-residue chain is Putative 2-aminoethylphosphonate transport system permease protein PhnU (289 aa).

6 consecutive transmembrane segments (helical) span residues 19–39, 76–96, 111–131, 150–170, 202–222, and 254–274; these read WLLLPLLVLATLFFWPLSLIV, FFATAGCLLLGSVMSLILVFI, FIALPTFLITLAFTFIYGSAG, FLYSMQGVILAEITVFTPLVM, VIFPAALPALMAGGSLCLLLT, and YTVACMIALINIVLSLGLFSL. The region spanning 68–275 is the ABC transmembrane type-1 domain; sequence LLNTLQIAFF…VLSLGLFSLY (208 aa).

It belongs to the binding-protein-dependent transport system permease family.

It localises to the cell inner membrane. In terms of biological role, probably part of the PhnSTUV complex (TC 3.A.1.11.5) involved in 2-aminoethylphosphonate import. Probably responsible for the translocation of the substrate across the membrane. This is Putative 2-aminoethylphosphonate transport system permease protein PhnU (phnU) from Salmonella paratyphi A (strain ATCC 9150 / SARB42).